Consider the following 1000-residue polypeptide: UPF0182 protein SCO5204 (1000 aa).

Transmembrane regions (helical) follow at residues 26–48, 70–92, 121–143, 177–199, 220–237, 267–289, and 296–318; these read LLLT…GFWT, IGLF…WLAH, WLLL…GQWR, FLLG…THYL, LSVL…AYWL, LPAK…ATLW, and PVIG…PALV. 2 disordered regions span residues 884–908 and 943–1000; these read AETE…NPTV and EALQ…ADTG. Residues 888 to 897 are compositionally biased toward acidic residues; it reads QPPDEGDDTT. Basic and acidic residues-rich tracts occupy residues 943-953 and 963-984; these read EALQRAEDAQA and NGDD…DKAG.

It belongs to the UPF0182 family.

It localises to the cell membrane. This is UPF0182 protein SCO5204 from Streptomyces coelicolor (strain ATCC BAA-471 / A3(2) / M145).